Reading from the N-terminus, the 151-residue chain is tRNA-specific adenosine deaminase (151 aa).

The CMP/dCMP-type deaminase domain occupies methionine 1–serine 111. Histidine 52 serves as a coordination point for Zn(2+). Residue glutamate 54 is the Proton donor of the active site. Zn(2+)-binding residues include cysteine 82 and cysteine 85.

Belongs to the cytidine and deoxycytidylate deaminase family. In terms of assembly, homodimer. The cofactor is Zn(2+).

The enzyme catalyses adenosine(34) in tRNA + H2O + H(+) = inosine(34) in tRNA + NH4(+). Functionally, catalyzes the deamination of adenosine to inosine at the wobble position 34 of tRNA(Arg2). The protein is tRNA-specific adenosine deaminase of Aquifex aeolicus (strain VF5).